The following is a 429-amino-acid chain: Dihydroorotase (429 aa).

Zn(2+)-binding residues include H61 and H63. Residues 63-65 (HYR) and N95 contribute to the substrate site. The Zn(2+) site is built by D153, H180, and H233. Substrate is bound at residue N279. Zn(2+) is bound at residue D306. The active site involves D306. Substrate is bound by residues H310 and 324–325 (FG).

It belongs to the metallo-dependent hydrolases superfamily. DHOase family. Class I DHOase subfamily. The cofactor is Zn(2+).

It catalyses the reaction (S)-dihydroorotate + H2O = N-carbamoyl-L-aspartate + H(+). Its pathway is pyrimidine metabolism; UMP biosynthesis via de novo pathway; (S)-dihydroorotate from bicarbonate: step 3/3. Catalyzes the reversible cyclization of carbamoyl aspartate to dihydroorotate. In Ligilactobacillus salivarius (strain UCC118) (Lactobacillus salivarius), this protein is Dihydroorotase.